A 478-amino-acid chain; its full sequence is MAPLRPFFILALVAWVSLADQESCKGRCTQGFMASKKCQCDELCTYYQSCCADYMEQCKPQVTRGDVFTMPEDDYWSYDYVEEPKNNTNTGVQPENTSPPGDLNPRTDGTLKPTAFLDPEEQPSTPAPKVEQQEEILRPDTTDQGTPEFPEEELCSGKPFDAFTDLKNGSLFAFRGQYCYELDETAVRPGYPKLIQDVWGIEGPIDAAFTRINCQGKTYLFKGSQYWRFEDGVLDPGYPRNISEGFSGIPDNVDAAFALPAHRYSGRERVYFFKGKQYWEYEFQQQPSQEECEGSSLSAVFEHFALLQRDSWENIFELLFWGRSSDGAREPQFISRNWHGVPGKVDAAMAGRIYVTGSLSHSAQAKKQKSKRRSRKRYRSRRGRGHRRSQSSNSRRSSRSIWFSLFSSEESGLGTYNNYDYDMDWLVPATCEPIQSVYFFSGDKYYRVNLRTRRVDSVNPPYPRSIAQYWLGCPTSEK.

A signal peptide spans 1–19 (MAPLRPFFILALVAWVSLA). Residues 20 to 63 (DQESCKGRCTQGFMASKKCQCDELCTYYQSCCADYMEQCKPQVT) form the SMB domain. Intrachain disulfides connect Cys24–Cys28, Cys24–Cys40, Cys28–Cys58, Cys38–Cys40, Cys38–Cys51, Cys44–Cys50, and Cys51–Cys58. Residues 64–66 (RGD) carry the Cell attachment site motif. Thr69 is subject to Phosphothreonine. A sulfotyrosine mark is found at Tyr75, Tyr78, and Tyr80. Residues 82-153 (EEPKNNTNTG…QGTPEFPEEE (72 aa)) form a disordered region. The N-linked (GlcNAc...) asparagine glycan is linked to Asn86. Polar residues predominate over residues 86–99 (NNTNTGVQPENTSP). Basic and acidic residues predominate over residues 131 to 141 (EQQEEILRPDT). Hemopexin repeat units follow at residues 157–201 (GKPF…VWGI), 202–249 (EGPI…FSGI), and 250–304 (PDNV…FEHF). N-linked (GlcNAc...) asparagine glycosylation is found at Asn168 and Asn241. Sulfotyrosine occurs at positions 278 and 281. Cys292 and Cys431 are joined by a disulfide. 2 positions are modified to phosphoserine: Ser311 and Ser362. The tract at residues 359–395 (LSHSAQAKKQKSKRRSRKRYRSRRGRGHRRSQSSNSR) is disordered. Basic residues predominate over residues 364–389 (QAKKQKSKRRSRKRYRSRRGRGHRRS). The heparin-binding stretch occupies residues 366–399 (KKQKSKRRSRKRYRSRRGRGHRRSQSSNSRRSSR). At Ser398 the chain carries Phosphoserine; by PKA. Sulfotyrosine is present on residues Tyr416, Tyr419, and Tyr421. The Hemopexin 4 repeat unit spans residues 420–473 (DYDMDWLVPATCEPIQSVYFFSGDKYYRVNLRTRRVDSVNPPYPRSIAQYWLGC).

In terms of assembly, interacts with SERPINE1/PAI1, insulin and C1QBP. Sulfated on tyrosine residues. In terms of processing, N- and O-glycosylated. Post-translationally, it has been suggested that the active SMB domain may be permitted considerable disulfide bond heterogeneity or variability, thus two alternate disulfide patterns based on 3D structures are described with 1 disulfide bond conserved in both. Plasma.

Its subcellular location is the secreted. The protein resides in the extracellular space. Its function is as follows. Vitronectin is a cell adhesion and spreading factor found in serum and tissues. Vitronectin interact with glycosaminoglycans and proteoglycans. Is recognized by certain members of the integrin family and serves as a cell-to-substrate adhesion molecule. Inhibitor of the membrane-damaging effect of the terminal cytolytic complement pathway. The polypeptide is Vitronectin (Vtn) (Mus musculus (Mouse)).